Reading from the N-terminus, the 286-residue chain is Forkhead box protein E3 (286 aa).

The tract at residues 1–62 is disordered; that stretch reads MDAHVAFSGF…GRRRRRPLQR (62 aa). A DNA-binding region (fork-head) is located at residues 64–158; it reads KPPYSYIALI…DNGSFLRRRK (95 aa).

Its subcellular location is the nucleus. Its function is as follows. Transcription factor that controls lens epithelial cell growth through regulation of proliferation, apoptosis and cell cycle. During lens development, controls the ratio of the lens fiber cells to the cells of the anterior lens epithelium by regulating the rate of proliferation and differentiation. Controls lens vesicle closure and subsequent separation of the lens vesicle from ectoderm. Controls the expression of DNAJB1 in a pathway that is crucial for the development of the anterior segment of the eye. This chain is Forkhead box protein E3 (Foxe3), found in Rattus norvegicus (Rat).